The chain runs to 81 residues: U12-hexatoxin-Mg1a (81 aa).

An N-terminal signal peptide occupies residues 1–24 (MKAPATIVILIMSLISVLWATADT). A propeptide spanning residues 25-50 (EDGNLLFPIEDFIRKFDEYPVQPKER) is cleaved from the precursor. Cystine bridges form between cysteine 52–cysteine 66, cysteine 59–cysteine 71, and cysteine 65–cysteine 75. Proline 78 carries the proline amide modification.

Expressed by the venom gland.

The protein resides in the secreted. Functionally, blocks voltage-gated sodium channels (Nav). Intracranial injection into mice causes lacrimation, slow breathing and death. Intrathorax injection into crickets causes death. This is U12-hexatoxin-Mg1a from Macrothele gigas (Japanese funnel web spider).